The chain runs to 207 residues: Keratin-associated protein 27-1 (207 aa).

The tract at residues 184 to 207 (QLLESSPGVEPTCCVTGGSQLPSK) is disordered.

Belongs to the PMG family. Interacts with hair keratins.

Functionally, in the hair cortex, hair keratin intermediate filaments are embedded in an interfilamentous matrix, consisting of hair keratin-associated proteins (KRTAP), which are essential for the formation of a rigid and resistant hair shaft through their extensive disulfide bond cross-linking with abundant cysteine residues of hair keratins. The matrix proteins include the high-sulfur and high-glycine-tyrosine keratins. The polypeptide is Keratin-associated protein 27-1 (KRTAP27-1) (Homo sapiens (Human)).